Reading from the N-terminus, the 133-residue chain is Urease subunit beta (133 aa).

Residues 106–133 (VFRPNDSNQNAAVKNDAGEDNANKKGGK) are disordered.

The protein belongs to the urease beta subunit family. Heterotrimer of UreA (gamma), UreB (beta) and UreC (alpha) subunits. Three heterotrimers associate to form the active enzyme.

It is found in the cytoplasm. It carries out the reaction urea + 2 H2O + H(+) = hydrogencarbonate + 2 NH4(+). It functions in the pathway nitrogen metabolism; urea degradation; CO(2) and NH(3) from urea (urease route): step 1/1. The chain is Urease subunit beta from Staphylococcus epidermidis (strain ATCC 12228 / FDA PCI 1200).